Reading from the N-terminus, the 122-residue chain is Large ribosomal subunit protein uL18 (122 aa).

Belongs to the universal ribosomal protein uL18 family. As to quaternary structure, part of the 50S ribosomal subunit; part of the 5S rRNA/L5/L18/L25 subcomplex. Contacts the 5S and 23S rRNAs.

Functionally, this is one of the proteins that bind and probably mediate the attachment of the 5S RNA into the large ribosomal subunit, where it forms part of the central protuberance. This is Large ribosomal subunit protein uL18 from Trichlorobacter lovleyi (strain ATCC BAA-1151 / DSM 17278 / SZ) (Geobacter lovleyi).